A 260-amino-acid polypeptide reads, in one-letter code: MKGISRMSIREVSEVLNTEPSEEFLKACAQDERLGIQNLIVRYYKEWEARLVEAERIEALLREEKQLWLNGYLHIAGIDEAGRGPLAGPVVAATCILPAKFNLPGLNDSKKLTESKREKLFQQIKEQAIGYAVGSAEPAEIDGLNILQATKLAMKRAVEGLKVRPHFLLIDALELPSLKIPQKGIIDGDALSASIAAASILAKVSRDHLMGELDKLYPEYGFAKNKGYGTREHLMALRRCGVSPIHRRSFAPVQQQLDIV.

Residues 73–260 enclose the RNase H type-2 domain; sequence LHIAGIDEAG…APVQQQLDIV (188 aa). Residues Asp-79, Glu-80, and Asp-171 each coordinate a divalent metal cation.

It belongs to the RNase HII family. Mn(2+) serves as cofactor. The cofactor is Mg(2+).

Its subcellular location is the cytoplasm. It carries out the reaction Endonucleolytic cleavage to 5'-phosphomonoester.. In terms of biological role, endonuclease that specifically degrades the RNA of RNA-DNA hybrids. This Desulfitobacterium hafniense (strain Y51) protein is Ribonuclease HII.